The sequence spans 255 residues: MLQISHLYADYGGKPALEDINLTLESGELLVVLGPSGCGKTTLLNLIAGFVPYQHGSIQLAGKRIEGPGAERGVVFQNEGLLPWRNVQDNVAFGLQLAGIEKMQRLEIAYQMLKKVGLEGAEKRYIWQLSGGQRQRVGIARALAANPQLLLLDEPFGALDAFTRDQMQTLLLKLWQETGKQVLLITHDIEEAVFMATELVLLSSGLGRVLERLPLNFARRFVAGESSRSIKSDPQFIAMREYVLSRVFEQREAFS.

Residues 2–229 (LQISHLYADY…RFVAGESSRS (228 aa)) enclose the ABC transporter domain. 34-41 (GPSGCGKT) contacts ATP.

Belongs to the ABC transporter superfamily. Taurine importer (TC 3.A.1.17.1) family. In terms of assembly, the complex is composed of two ATP-binding proteins (TauB), two transmembrane proteins (TauC) and a solute-binding protein (TauA).

The protein resides in the cell inner membrane. The catalysed reaction is taurine(out) + ATP + H2O = taurine(in) + ADP + phosphate + H(+). In terms of biological role, part of the ABC transporter complex TauABC involved in taurine import. Responsible for energy coupling to the transport system. This is Taurine import ATP-binding protein TauB from Shigella dysenteriae serotype 1 (strain Sd197).